The chain runs to 435 residues: Eukaryotic translation initiation factor 3 subunit E (435 aa).

Residues 219–392 (FFNHPKGRDL…GHVVMGTQPL (174 aa)) enclose the PCI domain.

This sequence belongs to the eIF-3 subunit E family. As to quaternary structure, component of the eukaryotic translation initiation factor 3 (eIF-3) complex. The eIF-3 complex interacts with pix. Interacts with mxt. In terms of tissue distribution, expression levels in females and males are relatively similar 10 days after oviposition, however by day 15 expression is higher in gravid females than in males (at protein level).

It is found in the cytoplasm. The protein resides in the microsome. Its subcellular location is the endoplasmic reticulum. Functionally, component of the eukaryotic translation initiation factor 3 (eIF-3) complex, which is involved in protein synthesis of a specialized repertoire of mRNAs and, together with other initiation factors, stimulates binding of mRNA and methionyl-tRNAi to the 40S ribosome. The eIF-3 complex specifically targets and initiates translation of a subset of mRNAs involved in cell proliferation. In addition to its role in the eIF-3 complex, also functions in protein ubiquitination and degradation. During mitosis required for regulating mitotic microtubule growth and kinetochore formation, and consequently is required for satisfying the spindle assembly checkpoint (SAC) during metaphase to prevent delays in mitotic progression. This is likely by promoting the ubiquitination and degradation of Klp67A, a kinesin-like protein that suppresses microtubule polymerization at plus ends. Acts in the COP9 signalosome (CSN) mediated regulation of cullin neddylation by promoting Cul1 and Cul3 neddylation and negatively regulating the CSN complex subunit CSN5. The polypeptide is Eukaryotic translation initiation factor 3 subunit E (Drosophila melanogaster (Fruit fly)).